Reading from the N-terminus, the 151-residue chain is Ribonuclease H (151 aa).

An RNase H type-1 domain is found at Ser-2–Asp-143. Residues Asp-11, Glu-49, Asp-71, and Asp-135 each coordinate Mg(2+).

It belongs to the RNase H family. In terms of assembly, monomer. Mg(2+) serves as cofactor.

Its subcellular location is the cytoplasm. It carries out the reaction Endonucleolytic cleavage to 5'-phosphomonoester.. Its function is as follows. Endonuclease that specifically degrades the RNA of RNA-DNA hybrids. This chain is Ribonuclease H, found in Methylobacillus flagellatus (strain ATCC 51484 / DSM 6875 / VKM B-1610 / KT).